Here is a 77-residue protein sequence, read N- to C-terminus: Subtilisin-chymotrypsin inhibitor CI-1C (77 aa).

Belongs to the protease inhibitor I13 (potato type I serine protease inhibitor) family.

Its function is as follows. Inhibits both subtilisin and chymotrypsin. This Hordeum vulgare (Barley) protein is Subtilisin-chymotrypsin inhibitor CI-1C.